A 718-amino-acid chain; its full sequence is NF-kappa-B inhibitor zeta (718 aa).

The segment covering 1–17 (MIVDKLLDDSRGGEGLR) has biased composition (basic and acidic residues). Disordered regions lie at residues 1–20 (MIVD…RDAA) and 58–108 (SAPG…RQQR). Low complexity predominate over residues 58-83 (SAPGSPGSDSSDFSSASSVSSCGAVE). Positions 84–97 (SRSRGGARAERQPV) are enriched in basic and acidic residues. The 23-residue stretch at 108-130 (RGPFQGVRVKNSVKELLLHIRSH) folds into the OCA domain. The short motif at 164 to 179 (KRKGPDSLSDGPACKR) is the Nuclear localization signal element. A disordered region spans residues 186–211 (QFLTPPQTPTPGESMEDVHLNEPKQE). Basic and acidic residues predominate over residues 201–211 (EDVHLNEPKQE). Residues 321–394 (AYEPNLFDGP…MVGHEMASDS (74 aa)) form a required for transcriptional activity region. Residues 404 to 718 (MGNPMNTTQL…KSIQQRAPPY (315 aa)) are interaction with NFKB1/p50. ANK repeat units lie at residues 443-472 (DGDT…ALHM), 479-508 (NGQS…QVNT), 512-541 (WGRT…GSNQ), 551-580 (DGLT…HSPE), 582-607 (QELL…AVEA), 612-641 (SGRT…CLSF), and 648-681 (NGNT…DPST).

Interacts with NFKB1/p50. Interacts with RELA. Interacts with AKIRIN2. In terms of tissue distribution, expressed at high levels in peripheral blood leukocytes and lung, at moderate levels in liver, placenta, and at low levels in spleen, kidney, skeletal muscle and heart.

It localises to the nucleus. In terms of biological role, involved in regulation of NF-kappa-B transcription factor complexes. Inhibits NF-kappa-B activity without affecting its nuclear translocation upon stimulation. Inhibits DNA-binding of RELA and NFKB1/p50, and of the NF-kappa-B p65-p50 heterodimer and the NF-kappa-B p50-p50 homodimer. Also seems to activate NF-kappa-B-mediated transcription. In vitro, upon association with NFKB1/p50 has transcriptional activation activity and, together with NFKB1/p50 and RELA, is recruited to LCN2 promoters. Promotes transcription of LCN2 and DEFB4. Is recruited to IL-6 promoters and activates IL-6 but decreases TNF-alpha production in response to LPS. Seems to be involved in the induction of inflammatory genes activated through TLR/IL-1 receptor signaling. Involved in the induction of T helper 17 cells (Th17) differentiation upon recognition of antigen by T cell antigen receptor (TCR). This chain is NF-kappa-B inhibitor zeta (NFKBIZ), found in Homo sapiens (Human).